A 450-amino-acid polypeptide reads, in one-letter code: Tubulin beta-1 chain (450 aa).

GTP contacts are provided by glutamine 11, glutamate 69, serine 138, glycine 142, threonine 143, glycine 144, asparagine 204, and asparagine 226. Glutamate 69 provides a ligand contact to Mg(2+). The interval 426-450 is disordered; sequence QDATADEDEYGEEEGDEEEYGQHDI. Over residues 429-444 the composition is skewed to acidic residues; that stretch reads TADEDEYGEEEGDEEE.

It belongs to the tubulin family. Dimer of alpha and beta chains. A typical microtubule is a hollow water-filled tube with an outer diameter of 25 nm and an inner diameter of 15 nM. Alpha-beta heterodimers associate head-to-tail to form protofilaments running lengthwise along the microtubule wall with the beta-tubulin subunit facing the microtubule plus end conferring a structural polarity. Microtubules usually have 13 protofilaments but different protofilament numbers can be found in some organisms and specialized cells. Mg(2+) is required as a cofactor.

It localises to the cytoplasm. The protein localises to the cytoskeleton. Tubulin is the major constituent of microtubules, a cylinder consisting of laterally associated linear protofilaments composed of alpha- and beta-tubulin heterodimers. Microtubules grow by the addition of GTP-tubulin dimers to the microtubule end, where a stabilizing cap forms. Below the cap, tubulin dimers are in GDP-bound state, owing to GTPase activity of alpha-tubulin. This Pisum sativum (Garden pea) protein is Tubulin beta-1 chain (TUBB1).